We begin with the raw amino-acid sequence, 209 residues long: Imidazole glycerol phosphate synthase subunit HisH (209 aa).

A Glutamine amidotransferase type-1 domain is found at 1-205 (MIAIIDYGMG…KGVVETWKSS (205 aa)). C79 acts as the Nucleophile in catalysis. Residues H180 and E182 contribute to the active site.

As to quaternary structure, heterodimer of HisH and HisF.

The protein localises to the cytoplasm. The catalysed reaction is 5-[(5-phospho-1-deoxy-D-ribulos-1-ylimino)methylamino]-1-(5-phospho-beta-D-ribosyl)imidazole-4-carboxamide + L-glutamine = D-erythro-1-(imidazol-4-yl)glycerol 3-phosphate + 5-amino-1-(5-phospho-beta-D-ribosyl)imidazole-4-carboxamide + L-glutamate + H(+). It carries out the reaction L-glutamine + H2O = L-glutamate + NH4(+). Its pathway is amino-acid biosynthesis; L-histidine biosynthesis; L-histidine from 5-phospho-alpha-D-ribose 1-diphosphate: step 5/9. IGPS catalyzes the conversion of PRFAR and glutamine to IGP, AICAR and glutamate. The HisH subunit catalyzes the hydrolysis of glutamine to glutamate and ammonia as part of the synthesis of IGP and AICAR. The resulting ammonia molecule is channeled to the active site of HisF. The polypeptide is Imidazole glycerol phosphate synthase subunit HisH (Bacillus anthracis (strain CDC 684 / NRRL 3495)).